The following is a 346-amino-acid chain: MGKPLIALGLEGSANKLGVGIILHDTNGSAKILANVRHTYITPPGQGFLPSDTAKHHRAWIIPLIKQAFAEAKISFKDIDCICFTKGPGIGAPLNSVALCARMLSLIHKKPLVAVNHCIGHIEMGREITGAQNPVVLYVSGGNTQVIAYSEKKYRIFGETLDIAIGNCLDRFARIIGLSNAPSPGYNIMQEAKKGKRFIELPYTVKGMDCSFSGLLSGVEAAATELLDPKNPSSVTKQDLCYSLQETGFAMLVEITERAMAHIRADSVLIVGGVGCNERLQQMMAEMSSDRGADVFSTDERFCIDNGIMIAQAGLLAYKTGDRCAVAESTITQRYRTDDVYISWRD.

A divalent metal cation is bound by residues H117, H121, and Y138. Substrate-binding positions include Y138–G142, D170, G185, and N277. A divalent metal cation is bound at residue D305.

The protein belongs to the KAE1 / TsaD family. Component of the EKC/KEOPS complex composed of at least SPAP27G11.07c/BUD32, cgi121, gon7, pgp2 and SPAC4H3.13/PCC1; the whole complex dimerizes. It depends on a divalent metal cation as a cofactor.

It is found in the cytoplasm. It localises to the nucleus. The catalysed reaction is L-threonylcarbamoyladenylate + adenosine(37) in tRNA = N(6)-L-threonylcarbamoyladenosine(37) in tRNA + AMP + H(+). Its function is as follows. Component of the EKC/KEOPS complex that is required for the formation of a threonylcarbamoyl group on adenosine at position 37 (t(6)A37) in tRNAs that read codons beginning with adenine. The complex is probably involved in the transfer of the threonylcarbamoyl moiety of threonylcarbamoyl-AMP (TC-AMP) to the N6 group of A37. Pgp2 likely plays a direct catalytic role in this reaction, but requires other protein(s) of the complex to fulfill this activity. The EKC/KEOPS complex also promotes both telomere uncapping and telomere elongation. The complex is required for efficient recruitment of transcriptional coactivators. This is tRNA N6-adenosine threonylcarbamoyltransferase (pgp2) from Schizosaccharomyces pombe (strain 972 / ATCC 24843) (Fission yeast).